We begin with the raw amino-acid sequence, 370 residues long: 3-dehydroquinate synthase (370 aa).

NAD(+) contacts are provided by residues glycine 112–aspartate 116, threonine 136–serine 137, lysine 149, lysine 158, and threonine 176–threonine 179. 3 residues coordinate Zn(2+): glutamate 191, histidine 254, and histidine 276.

Belongs to the sugar phosphate cyclases superfamily. Dehydroquinate synthase family. Co(2+) serves as cofactor. The cofactor is Zn(2+). NAD(+) is required as a cofactor.

The protein resides in the cytoplasm. The catalysed reaction is 7-phospho-2-dehydro-3-deoxy-D-arabino-heptonate = 3-dehydroquinate + phosphate. It participates in metabolic intermediate biosynthesis; chorismate biosynthesis; chorismate from D-erythrose 4-phosphate and phosphoenolpyruvate: step 2/7. In terms of biological role, catalyzes the conversion of 3-deoxy-D-arabino-heptulosonate 7-phosphate (DAHP) to dehydroquinate (DHQ). The chain is 3-dehydroquinate synthase from Xanthomonas oryzae pv. oryzae (strain PXO99A).